The primary structure comprises 383 residues: ATP phosphoribosyltransferase regulatory subunit (383 aa).

The protein belongs to the class-II aminoacyl-tRNA synthetase family. HisZ subfamily. Heteromultimer composed of HisG and HisZ subunits.

It is found in the cytoplasm. The protein operates within amino-acid biosynthesis; L-histidine biosynthesis; L-histidine from 5-phospho-alpha-D-ribose 1-diphosphate: step 1/9. Functionally, required for the first step of histidine biosynthesis. May allow the feedback regulation of ATP phosphoribosyltransferase activity by histidine. The chain is ATP phosphoribosyltransferase regulatory subunit from Lactiplantibacillus plantarum (strain ATCC BAA-793 / NCIMB 8826 / WCFS1) (Lactobacillus plantarum).